We begin with the raw amino-acid sequence, 329 residues long: GTP 3',8-cyclase (329 aa).

In terms of domain architecture, Radical SAM core spans 1–229 (MNQIDYLRIS…EGQVRGNGPA (229 aa)). Arg-8 serves as a coordination point for GTP. [4Fe-4S] cluster contacts are provided by Cys-15 and Cys-19. Position 21 (Tyr-21) interacts with S-adenosyl-L-methionine. Cys-22 provides a ligand contact to [4Fe-4S] cluster. Residue Arg-60 participates in GTP binding. Gly-64 lines the S-adenosyl-L-methionine pocket. Thr-91 contacts GTP. Ser-115 is an S-adenosyl-L-methionine binding site. Residue Lys-155 coordinates GTP. An S-adenosyl-L-methionine-binding site is contributed by Met-189. 2 residues coordinate [4Fe-4S] cluster: Cys-252 and Cys-255. 257-259 (RLR) provides a ligand contact to GTP. Cys-269 is a [4Fe-4S] cluster binding site.

The protein belongs to the radical SAM superfamily. MoaA family. Monomer and homodimer. Requires [4Fe-4S] cluster as cofactor.

It carries out the reaction GTP + AH2 + S-adenosyl-L-methionine = (8S)-3',8-cyclo-7,8-dihydroguanosine 5'-triphosphate + 5'-deoxyadenosine + L-methionine + A + H(+). It functions in the pathway cofactor biosynthesis; molybdopterin biosynthesis. In terms of biological role, catalyzes the cyclization of GTP to (8S)-3',8-cyclo-7,8-dihydroguanosine 5'-triphosphate. This chain is GTP 3',8-cyclase, found in Microcystis aeruginosa (strain NIES-843 / IAM M-2473).